Here is a 266-residue protein sequence, read N- to C-terminus: Apolipoprotein A-I (266 aa).

The N-terminal stretch at 1 to 18 is a signal peptide; sequence MKAVVLTLAVLFLTGSQA. 2 repeat units span residues 67-88 and 89-110. Positions 67 to 266 are 10 X approximate tandem repeats; that stretch reads LKLLDNWDSL…DEAAKKLNAQ (200 aa). M109 bears the Methionine sulfoxide mark. One copy of the 3; half-length repeat lies at 111 to 121; sequence KDLEEVKQKVQ. Tandem repeats lie at residues 122 to 142, 144 to 165, 166 to 187, 188 to 210, and 211 to 231. Residues 232–242 form a 9; half-length repeat; that stretch reads PALEDLRQGLL. Repeat 10 spans residues 243-266; sequence PVLESFKVSLLAAVDEAAKKLNAQ.

It belongs to the apolipoprotein A1/A4/E family. Homodimer. Interacts with APOA1BP and CLU. Component of a sperm activating protein complex (SPAP), consisting of APOA1, an immunoglobulin heavy chain, an immunoglobulin light chain and albumin. Interacts with NDRG1. Interacts with SCGB3A2. Interacts with NAXE and YJEFN3. Post-translationally, glycosylated. Palmitoylated. In terms of processing, phosphorylation sites are present in the extracellular medium. As to expression, major protein of plasma HDL, also found in chylomicrons.

It localises to the secreted. Functionally, participates in the reverse transport of cholesterol from tissues to the liver for excretion by promoting cholesterol efflux from tissues and by acting as a cofactor for the lecithin cholesterol acyltransferase (LCAT). As part of the SPAP complex, activates spermatozoa motility. The protein is Apolipoprotein A-I (APOA1) of Ailuropoda melanoleuca (Giant panda).